A 1499-amino-acid chain; its full sequence is DNA-directed RNA polymerase subunit beta' (1499 aa).

Cysteine 67, cysteine 69, cysteine 82, and cysteine 85 together coordinate Zn(2+). Residues aspartate 497, aspartate 499, and aspartate 501 each contribute to the Mg(2+) site. Zn(2+)-binding residues include cysteine 865, cysteine 940, cysteine 947, and cysteine 950. The interval 1475 to 1499 is disordered; the sequence is YEPSQRAYQEDEYAKKEDGEIAIDD. The segment covering 1482-1493 has biased composition (basic and acidic residues); sequence YQEDEYAKKEDG.

Belongs to the RNA polymerase beta' chain family. As to quaternary structure, the RNAP catalytic core consists of 2 alpha, 1 beta, 1 beta' and 1 omega subunit. When a sigma factor is associated with the core the holoenzyme is formed, which can initiate transcription. It depends on Mg(2+) as a cofactor. Requires Zn(2+) as cofactor.

The catalysed reaction is RNA(n) + a ribonucleoside 5'-triphosphate = RNA(n+1) + diphosphate. Its function is as follows. DNA-dependent RNA polymerase catalyzes the transcription of DNA into RNA using the four ribonucleoside triphosphates as substrates. The protein is DNA-directed RNA polymerase subunit beta' of Chloroherpeton thalassium (strain ATCC 35110 / GB-78).